Consider the following 204-residue polypeptide: Thymidine kinase (204 aa).

Residues 23–30 (GSMFSGKT) and 95–98 (DEAQ) contribute to the ATP site. The active-site Proton acceptor is the glutamate 96. Zn(2+) contacts are provided by cysteine 152, cysteine 155, cysteine 184, and cysteine 187.

This sequence belongs to the thymidine kinase family. As to quaternary structure, homotetramer.

It localises to the cytoplasm. It carries out the reaction thymidine + ATP = dTMP + ADP + H(+). This Porphyromonas gingivalis (strain ATCC BAA-308 / W83) protein is Thymidine kinase.